The sequence spans 394 residues: Elongation factor Tu (394 aa).

Residues 10 to 205 (KPHVNIGTIG…VDTWIPLPPR (196 aa)) form the tr-type G domain. The tract at residues 19–26 (GHVDHGKT) is G1. Residue 19 to 26 (GHVDHGKT) coordinates GTP. Thr26 provides a ligand contact to Mg(2+). The interval 60–64 (GITIN) is G2. A G3 region spans residues 81–84 (DCPG). GTP is bound by residues 81–85 (DCPGH) and 136–139 (NKCD). Residues 136-139 (NKCD) are G4. The interval 174–176 (SAL) is G5.

This sequence belongs to the TRAFAC class translation factor GTPase superfamily. Classic translation factor GTPase family. EF-Tu/EF-1A subfamily. As to quaternary structure, monomer.

The protein resides in the cytoplasm. The catalysed reaction is GTP + H2O = GDP + phosphate + H(+). Its function is as follows. GTP hydrolase that promotes the GTP-dependent binding of aminoacyl-tRNA to the A-site of ribosomes during protein biosynthesis. In Bacteroides fragilis (strain ATCC 25285 / DSM 2151 / CCUG 4856 / JCM 11019 / LMG 10263 / NCTC 9343 / Onslow / VPI 2553 / EN-2), this protein is Elongation factor Tu.